A 323-amino-acid chain; its full sequence is tRNA U34 carboxymethyltransferase (323 aa).

Carboxy-S-adenosyl-L-methionine-binding positions include Lys-91, Trp-105, Lys-110, Gly-130, 152-154 (DPT), 181-182 (IE), Met-196, Tyr-200, and Arg-315.

The protein belongs to the class I-like SAM-binding methyltransferase superfamily. CmoB family. Homotetramer.

It catalyses the reaction carboxy-S-adenosyl-L-methionine + 5-hydroxyuridine(34) in tRNA = 5-carboxymethoxyuridine(34) in tRNA + S-adenosyl-L-homocysteine + H(+). Its function is as follows. Catalyzes carboxymethyl transfer from carboxy-S-adenosyl-L-methionine (Cx-SAM) to 5-hydroxyuridine (ho5U) to form 5-carboxymethoxyuridine (cmo5U) at position 34 in tRNAs. This Escherichia coli O7:K1 (strain IAI39 / ExPEC) protein is tRNA U34 carboxymethyltransferase.